We begin with the raw amino-acid sequence, 989 residues long: MESFQQIKNNKVDLISTNDPLDKNRLLIEDLWESVLREECPDDQAERLIQLKELSYSKQIEGDSSKTFKKEIVDIVNSMDLAESIAAARAFSLYFQLVNILEQRVEEDRYIQSFTNKNVQKSPDNLDPFAPALARQNAPVTFRELFYRLRKLNVPPGKLEELLQEMDIRLVFTAHPTEIVRHTIRHKQTRVANLLKKIQVEQFLTKEEKNFLKIQLKEEVRLWWRTDELHQFKPSVLDEVDYALHYFQQVLFNAMPQLRGRIAEALTENYPDVQLPSQSFCNFGSWVGSDRDGNPSVTPEITWRTACYQRQLMLERYITATSHLRDQLSVSMQWSQVSSSLLESLETDRVKFPAIYEARATRYRSEPYRLKLSYILEKLRLTQERNNLLADNGWKFDLEGELNTKNIDKVENLYYKSVNEFTYDLELIKNSLISTDLTCEAVNTLLTQVHIFGFSLASLDIRQESTRHSDAIQELTKYLDLSVQYDQMSEDEKIKWLVDELNTKRPLIPSDVKWTNTTEETFSVFKMVKRLQQEFGSRICHAYVISMSHSASDLLEVLLLAKEMGLLDQNSKNSNLLVVPLFETVEDLKRAPEVMEKLFKLDFYKSLLPKVGESFKPLQELMLGYSDSNKDSGFVSSNWEIHRAQIALQNLASRNNILLRLFHGRGGSVGRGGGPAYQAILAQPSGTLKGRIKITEQGEVLASKYSLPELALYNLETVTTAVIQNSLVNNRLDATPEWNQLMSRLAETSRSHYRKLVYENPDLLNFFQEVTPIEEISKLQISSRPARRKKGAKDLSSLRAIPWVFGWTQSRFLLPSWFGVGTALSSELNSDPQQIELLRVLHQRWPFFRMLISKVEMTLSKVDLEVAKYYVDTLGSEENKDSFDDIFEVISKEYSLTKSLVLEITGKNKLLESDRDLKSSVSLRNKTIIPLGFLQVSLLRRLRDQTRQPPISEFLIDKDESRRAYSRSELLRGALLTINGIAAGMRNTG.

Catalysis depends on residues H175 and K630.

Belongs to the PEPCase type 1 family. It depends on Mg(2+) as a cofactor.

It catalyses the reaction oxaloacetate + phosphate = phosphoenolpyruvate + hydrogencarbonate. In terms of biological role, forms oxaloacetate, a four-carbon dicarboxylic acid source for the tricarboxylic acid cycle. This Prochlorococcus marinus (strain MIT 9312) protein is Phosphoenolpyruvate carboxylase.